A 358-amino-acid chain; its full sequence is Fructose-bisphosphate aldolase 1, cytoplasmic (358 aa).

R39 provides a ligand contact to substrate. E183 functions as the Proton acceptor in the catalytic mechanism. K225 serves as the catalytic Schiff-base intermediate with dihydroxyacetone-P. Residues 266–268 (SGG) and R298 each bind substrate.

Belongs to the class I fructose-bisphosphate aldolase family. Homotetramer. Expressed in callus.

The protein resides in the cytoplasm. It is found in the cytosol. It carries out the reaction beta-D-fructose 1,6-bisphosphate = D-glyceraldehyde 3-phosphate + dihydroxyacetone phosphate. Its pathway is carbohydrate degradation; glycolysis; D-glyceraldehyde 3-phosphate and glycerone phosphate from D-glucose: step 4/4. In terms of biological role, fructose-bisphosphate aldolase that plays a key role in glycolysis and gluconeogenesis. Involved in gibberellin-mediated root growth. May be regulated by CDPK13. Associates with vacuolar proton ATPase (V-ATPase) and may regulate the V-ATPase-mediated control of root cell elongation. The sequence is that of Fructose-bisphosphate aldolase 1, cytoplasmic from Oryza sativa subsp. japonica (Rice).